We begin with the raw amino-acid sequence, 663 residues long: Transforming growth factor beta activator LRRC32 (663 aa).

A signal peptide spans 1–17 (MSHQILLLLAMLTLGLA). Over 18–628 (ISQRREQVPC…CEKGGLKNVN (611 aa)) the chain is Extracellular. The region spanning 22 to 49 (REQVPCRTVNKEALCHGLGLLQVPSVLS) is the LRRNT domain. LRR repeat units lie at residues 49 to 72 (SLDI…PLGF), 73 to 96 (YTAL…VFQA), 98 to 123 (PYLE…GLGR), 125 to 148 (PLLV…LLGE), 149 to 172 (TPRL…TFWG), 174 to 196 (PAVE…AFEA), 197 to 220 (LPHL…SLQQ), 222 to 241 (QVLD…PEPQ), 243 to 267 (QFQL…VFPR), and 269 to 287 (IYLN…LPRG). N-linked (GlcNAc...) asparagine glycosylation occurs at Asn-204. Residues Asn-272, Asn-305, and Asn-309 are each glycosylated (N-linked (GlcNAc...) asparagine). The interval 291-311 (LHAPSEGWSASPLSNPSRNAS) is disordered. Residues 301-311 (SPLSNPSRNAS) show a composition bias toward polar residues. 11 LRR repeats span residues 315–338 (LSQL…FLEH), 340–362 (TSLR…QVDS), 363–386 (LPCL…TKVL), 387–409 (GSLQ…TFAS), 411–433 (ASLQ…AEPG), 443–466 (IPTL…SFLH), 468–489 (PLTE…ALVG), 491–514 (EASL…LPCF), 515–539 (LRLK…AVSL), 541–559 (VLDL…AMGG), and 561–584 (ETSL…WLAA). Residue Asn-346 is glycosylated (N-linked (GlcNAc...) asparagine). N-linked (GlcNAc...) asparagine glycosylation occurs at Asn-546. An LRRCT domain is found at 572–621 (NPLSCCGNGWLAAQLHQGRVDVDATQDLICRFGSQEELSLSLVRPEDCEK). A helical transmembrane segment spans residues 629-649 (LILLLSFTLVSAIVLTTLATI). The Cytoplasmic portion of the chain corresponds to 650 to 663 (CFLRRQKLSQQYKA).

Belongs to the LRRC32/LRRC33 family. Interacts with TGFB1; associates via disulfide bonds with the Latency-associated peptide chain (LAP) regulatory chain of TGFB1, leading to regulate activation of TGF-beta-1. Interacts with TGFB2. Interacts with TGFB3; associates via disulfide bonds with the Latency-associated peptide chain (LAP) regulatory chain of TGFB3, leading to regulate activation of TGF-beta-3. Interacts with LAPTM4B; decreases TGFB1 production in regulatory T-cells. Present in medial edge epithelial cells at 14.5 dpc (at protein level).

It localises to the cell membrane. The protein resides in the cell surface. Functionally, key regulator of transforming growth factor beta (TGFB1, TGFB2 and TGFB3) that controls TGF-beta activation by maintaining it in a latent state during storage in extracellular space. Associates specifically via disulfide bonds with the Latency-associated peptide (LAP), which is the regulatory chain of TGF-beta, and regulates integrin-dependent activation of TGF-beta. Able to outcompete LTBP1 for binding to LAP regulatory chain of TGF-beta. Controls activation of TGF-beta-1 (TGFB1) on the surface of activated regulatory T-cells (Tregs). Required for epithelial fusion during palate development by regulating activation of TGF-beta-3 (TGFB3). The sequence is that of Transforming growth factor beta activator LRRC32 from Mus musculus (Mouse).